The sequence spans 28 residues: M-poneritoxin-Dq4b/U1-poneritoxin-Dq4c/U1-poneritoxin-Dq4d (28 aa).

M20 carries the methionine sulfoxide; in form U1-PONTX-Dq4d modification. At A28 the chain carries Alanine amide; in form Dq-1362 and U1-PONTX-Dq4d.

Occurs in 3 forms, M-PONTX-Dq4b has an amidated Ala-28, U1-PONTX-Dq4d has an amidated Ala-28 and an oxidized Met-20, U1-PONTX-Dq4c has no modifications at either Met-20 or Ala-28. Expressed by the venom gland.

The protein localises to the secreted. Functionally, M-poneritoxin-Dq4b: this synthetic peptide has antimicrobial activity against Gram-positive bacteria B.amyloliquefacies S499 (MIC=0.1 mM), L.monocytogenes 2231 and S.aureus ATCC 29213, against Gram-negative bacteria P.putida BTP1, P.aeruginosa PaO1 and E.coli ATCC 10536, and against the fungi S.cerevisiae, R.mucilaginosa and C.cucumerinum. Not active against the fungi F.oxysporum and B.cinerea. The chain is M-poneritoxin-Dq4b/U1-poneritoxin-Dq4c/U1-poneritoxin-Dq4d from Dinoponera quadriceps (South American ant).